The primary structure comprises 276 residues: Bis(5'-nucleosyl)-tetraphosphatase, symmetrical (276 aa).

This sequence belongs to the Ap4A hydrolase family.

The catalysed reaction is P(1),P(4)-bis(5'-adenosyl) tetraphosphate + H2O = 2 ADP + 2 H(+). Functionally, hydrolyzes diadenosine 5',5'''-P1,P4-tetraphosphate to yield ADP. In Legionella pneumophila (strain Corby), this protein is Bis(5'-nucleosyl)-tetraphosphatase, symmetrical.